Reading from the N-terminus, the 520-residue chain is BBSome complex member BBS4 (520 aa).

A disordered region spans residues 1 to 26 (MAEVKLGMKTQVPASVESQKPRSKKA). The segment at 1–66 (MAEVKLGMKT…EQLQETQGLC (66 aa)) is required for localization to centrosomes. 10 TPR repeats span residues 67 to 100 (EYAI…SPQC), 102 to 134 (DNLK…NQKD), 135 to 167 (WEIC…LNKH), 168 to 201 (DLTY…SPEN), 203 to 235 (ELLT…DPAN), 237 to 269 (KAIL…IPES), 270 to 303 (PPLW…APFD), 304 to 337 (WKIL…QPKM), 339 to 371 (ELYM…DKCN), and 373 to 408 (LVNL…LKDN). Residues 101 to 337 (ADNLKQVARS…SAAINFQPKM (237 aa)) form an interaction with PCM1 region. The required for localization to centrosomes stretch occupies residues 338-520 (GELYMLLAVA…TEASEQKKEK (183 aa)). Residues 488–520 (AQLPKPPSLPLEPEPEPTVEASPTEASEQKKEK) are disordered.

Belongs to the BBS4 family. As to quaternary structure, part of BBSome complex, that contains BBS1, BBS2, BBS4, BBS5, BBS7, BBS8/TTC8, BBS9 and BBIP10. Interacts with PCM1 and DCTN1. Interacts with DC28B. Interacts with ALDOB and C2CD3. Interacts with PKD1. Interacts with CEP290. Interacts with DLEC1. As to expression, expressed in the hippocampus and dentate gyrus, the columnar epithelial cells of bronchioles, the olfactory epithelium and the inner segment and outer nuclear layer of the retina. Expressed in testis.

The protein localises to the cytoplasm. It localises to the cytoskeleton. It is found in the microtubule organizing center. Its subcellular location is the centrosome. The protein resides in the cell projection. The protein localises to the cilium membrane. It localises to the centriolar satellite. It is found in the cilium. Its subcellular location is the flagellum. In terms of biological role, the BBSome complex is thought to function as a coat complex required for sorting of specific membrane proteins to the primary cilia. The BBSome complex is required for ciliogenesis but is dispensable for centriolar satellite function. This ciliogenic function is mediated in part by the Rab8 GDP/GTP exchange factor, which localizes to the basal body and contacts the BBSome. Rab8(GTP) enters the primary cilium and promotes extension of the ciliary membrane. Firstly the BBSome associates with the ciliary membrane and binds to RAB3IP/Rabin8, the guanosyl exchange factor (GEF) for Rab8 and then the Rab8-GTP localizes to the cilium and promotes docking and fusion of carrier vesicles to the base of the ciliary membrane. The BBSome complex, together with the LTZL1, controls SMO ciliary trafficking and contributes to the sonic hedgehog (SHH) pathway regulation. Required for proper BBSome complex assembly and its ciliary localization. Required for microtubule anchoring at the centrosome but not for microtubule nucleation. May be required for the dynein-mediated transport of pericentriolar proteins to the centrosome. The protein is BBSome complex member BBS4 (Bbs4) of Mus musculus (Mouse).